The following is a 105-amino-acid chain: Class I hydrophobin 1 (105 aa).

The N-terminal stretch at 1 to 18 is a signal peptide; the sequence is MAFIKSLLIASVAAVAFA. Disulfide bonds link Cys-42-Cys-83, Cys-50-Cys-76, Cys-51-Cys-62, and Cys-84-Cys-100.

It belongs to the fungal hydrophobin family. As to quaternary structure, self-assembles to form functional amyloid fibrils called rodlets. Self-assembly into fibrillar rodlets occurs spontaneously at hydrophobic:hydrophilic interfaces and the rodlets further associate laterally to form amphipathic monolayers.

It localises to the secreted. The protein localises to the cell wall. Aerial growth, conidiation, and dispersal of filamentous fungi in the environment rely upon a capability of their secreting small amphipathic proteins called hydrophobins (HPBs) with low sequence identity. Class I can self-assemble into an outermost layer of rodlet bundles on aerial cell surfaces, conferring cellular hydrophobicity that supports fungal growth, development and dispersal; whereas Class II form highly ordered films at water-air interfaces through intermolecular interactions but contribute nothing to the rodlet structure. The chain is Class I hydrophobin 1 from Davidiella tassiana (Mycosphaerella tassiana).